The primary structure comprises 164 residues: MAEETAEKPVVESFQLDHTKVKAPYVRYIDTETGPHGDVISNYDLRLTQPNKQAIPTGGLHTIEHTIAVLLRERIPGYIDCSPFGCRTGFHLLTWGTHPTEEVAKALKESLEFIAYKATWDDVPATTEKSCGNYRDHSLFTAKEWAKQILEEGISSDPFERKVV.

The Fe cation site is built by His-61, His-65, and Cys-131.

Belongs to the LuxS family. Homodimer. It depends on Fe cation as a cofactor.

The enzyme catalyses S-(5-deoxy-D-ribos-5-yl)-L-homocysteine = (S)-4,5-dihydroxypentane-2,3-dione + L-homocysteine. In terms of biological role, involved in the synthesis of autoinducer 2 (AI-2) which is secreted by bacteria and is used to communicate both the cell density and the metabolic potential of the environment. The regulation of gene expression in response to changes in cell density is called quorum sensing. Catalyzes the transformation of S-ribosylhomocysteine (RHC) to homocysteine (HC) and 4,5-dihydroxy-2,3-pentadione (DPD). This is S-ribosylhomocysteine lyase from Bifidobacterium longum (strain DJO10A).